Reading from the N-terminus, the 148-residue chain is 3-hydroxyacyl-[acyl-carrier-protein] dehydratase FabZ (148 aa).

The active site involves His-49.

The protein belongs to the thioester dehydratase family. FabZ subfamily.

The protein resides in the cytoplasm. The enzyme catalyses a (3R)-hydroxyacyl-[ACP] = a (2E)-enoyl-[ACP] + H2O. In terms of biological role, involved in unsaturated fatty acids biosynthesis. Catalyzes the dehydration of short chain beta-hydroxyacyl-ACPs and long chain saturated and unsaturated beta-hydroxyacyl-ACPs. The protein is 3-hydroxyacyl-[acyl-carrier-protein] dehydratase FabZ of Ehrlichia canis (strain Jake).